The following is a 304-amino-acid chain: Cytochrome c biogenesis protein CcsA (304 aa).

8 consecutive transmembrane segments (helical) span residues 8–28 (LVTS…PIAF), 37–57 (PGVV…QLVL), 63–83 (GHFP…ACTL), 96–116 (IVAA…SFAL), 141–161 (VIMV…AVLV), 212–232 (TITV…VWAN), 246–263 (TWAL…HTRL), and 275–295 (VAVV…LLGI).

It belongs to the CcmF/CycK/Ccl1/NrfE/CcsA family. As to quaternary structure, may interact with ccs1.

It is found in the cellular thylakoid membrane. In terms of biological role, required during biogenesis of c-type cytochromes (cytochrome c6 and cytochrome f) at the step of heme attachment. This is Cytochrome c biogenesis protein CcsA from Synechococcus sp. (strain CC9902).